The chain runs to 114 residues: Non-specific lipid-transfer protein 1 (114 aa).

The N-terminal stretch at 1-25 (MIKGLAITVVAVLAVVQLLARPSDA) is a signal peptide. 4 disulfides stabilise this stretch: cysteine 29–cysteine 76, cysteine 39–cysteine 53, cysteine 54–cysteine 99, and cysteine 74–cysteine 113.

It belongs to the plant LTP family. As to expression, expressed in seeds and, at very low levels, in pulp of fruit (at protein level).

Functionally, plant non-specific lipid-transfer proteins transfer phospholipids as well as galactolipids across membranes. May play a role in wax or cutin deposition in the cell walls of expanding epidermal cells and certain secretory tissues. The sequence is that of Non-specific lipid-transfer protein 1 from Actinidia chinensis var. chinensis (Chinese soft-hair kiwi).